Reading from the N-terminus, the 46-residue chain is MFFIRARFIGFLDVHGYLAAKKGQQVMRSGSSMWVGSQGPIFYKVF.

The chain is Late transcription unit A protein (ltuA) from Chlamydia muridarum (strain MoPn / Nigg).